A 180-amino-acid polypeptide reads, in one-letter code: Beta-lactoglobulin-1/B (180 aa).

A signal peptide spans 1 to 18 (MKCLLLALGLALACGVQA). 3 disulfide bridges follow: Cys84/Cys178, Cys124/Cys137, and Cys124/Cys139.

It belongs to the calycin superfamily. Lipocalin family. In terms of assembly, under physiological conditions beta-lactoglobulin exists as an equilibrium mixture of monomeric and dimeric forms. Alternate disulfide bonds occur in equal amounts.

The protein localises to the secreted. Functionally, lactoglobulin is the primary component of whey, it binds retinol and is probably involved in the transport of that molecule. This Ovis aries (Sheep) protein is Beta-lactoglobulin-1/B.